The sequence spans 160 residues: Cyclic pyranopterin monophosphate synthase (160 aa).

Substrate contacts are provided by residues leucine 74–histidine 76 and methionine 112–glutamate 113. Aspartate 127 is a catalytic residue.

Belongs to the MoaC family. In terms of assembly, homohexamer; trimer of dimers.

It carries out the reaction (8S)-3',8-cyclo-7,8-dihydroguanosine 5'-triphosphate = cyclic pyranopterin phosphate + diphosphate. It functions in the pathway cofactor biosynthesis; molybdopterin biosynthesis. Functionally, catalyzes the conversion of (8S)-3',8-cyclo-7,8-dihydroguanosine 5'-triphosphate to cyclic pyranopterin monophosphate (cPMP). This Geobacter metallireducens (strain ATCC 53774 / DSM 7210 / GS-15) protein is Cyclic pyranopterin monophosphate synthase.